We begin with the raw amino-acid sequence, 486 residues long: PTS system N-acetylmuramic acid-specific EIIBC component (486 aa).

Residues 1-89 (MAKITQTMIS…NKLIESVING (89 aa)) enclose the PTS EIIB type-1 domain. Residue Cys28 is the Phosphocysteine intermediate; for EIIB activity of the active site. The PTS EIIC type-1 domain occupies 127-486 (SKFATIFTPL…FFGSKDVDLS (360 aa)). 10 helical membrane passes run 129–149 (FATIFTPLIPGFIAAGLLLGF), 170–190 (LIAYMKVFGKGLFAFLSILIG), 196–216 (AFGGSGVNGAILASLFVLGYN), 230–250 (FFGYTIDPRGNIIGVLLAAII), 268–288 (MILTSVVTLLIMGVVTFVVIM), 312–332 (AAILAGLFLISVVFGIHQGFV), 347–367 (LFPILAMAGGGQVGASLALYF), 381–401 (GAIIPGILGIGEPLIYGVTLP), 411–431 (IGGAAGGFFIGLVSYLGLPVG), and 453–473 (IFAGMAVFVVGLLISYVVGFL).

It is found in the cell inner membrane. It carries out the reaction N-acetyl-beta-D-muramate(out) + N(pros)-phospho-L-histidyl-[protein] = N-acetyl-beta-D-muramate 6-phosphate(in) + L-histidyl-[protein]. In terms of biological role, the phosphoenolpyruvate-dependent sugar phosphotransferase system (sugar PTS), a major carbohydrate active transport system, catalyzes the phosphorylation of incoming sugar substrates concomitantly with their translocation across the cell membrane. This system is involved in N-acetylmuramic acid (MurNAc) transport, yielding cytoplasmic MurNAc-6-P. Is also able to take up anhydro-N-acetylmuramic acid (anhMurNAc), but cannot phosphorylate the carbon 6, probably because of the 1,6-anhydro ring. The protein is PTS system N-acetylmuramic acid-specific EIIBC component (murP) of Vibrio vulnificus (strain YJ016).